A 603-amino-acid polypeptide reads, in one-letter code: Elongation factor 4 (603 aa).

Positions 7 to 189 (VRIRNFCIIA…AVVERIPPPP (183 aa)) constitute a tr-type G domain. GTP is bound by residues 19 to 24 (DHGKST) and 136 to 139 (NKID).

It belongs to the TRAFAC class translation factor GTPase superfamily. Classic translation factor GTPase family. LepA subfamily.

The protein resides in the cell inner membrane. It carries out the reaction GTP + H2O = GDP + phosphate + H(+). Its function is as follows. Required for accurate and efficient protein synthesis under certain stress conditions. May act as a fidelity factor of the translation reaction, by catalyzing a one-codon backward translocation of tRNAs on improperly translocated ribosomes. Back-translocation proceeds from a post-translocation (POST) complex to a pre-translocation (PRE) complex, thus giving elongation factor G a second chance to translocate the tRNAs correctly. Binds to ribosomes in a GTP-dependent manner. This is Elongation factor 4 from Nostoc punctiforme (strain ATCC 29133 / PCC 73102).